Reading from the N-terminus, the 249-residue chain is 5'-nucleotidase SurE (249 aa).

Positions 8, 9, 39, and 91 each coordinate a divalent metal cation.

It belongs to the SurE nucleotidase family. It depends on a divalent metal cation as a cofactor.

Its subcellular location is the cytoplasm. The enzyme catalyses a ribonucleoside 5'-phosphate + H2O = a ribonucleoside + phosphate. Nucleotidase that shows phosphatase activity on nucleoside 5'-monophosphates. This chain is 5'-nucleotidase SurE, found in Pseudomonas putida (strain W619).